Consider the following 156-residue polypeptide: Small ribosomal subunit protein uS7 (156 aa).

It belongs to the universal ribosomal protein uS7 family. In terms of assembly, part of the 30S ribosomal subunit. Contacts proteins S9 and S11.

In terms of biological role, one of the primary rRNA binding proteins, it binds directly to 16S rRNA where it nucleates assembly of the head domain of the 30S subunit. Is located at the subunit interface close to the decoding center, probably blocks exit of the E-site tRNA. This is Small ribosomal subunit protein uS7 from Buchnera aphidicola subsp. Baizongia pistaciae (strain Bp).